We begin with the raw amino-acid sequence, 323 residues long: Zinc finger C2HC domain-containing protein 1A (323 aa).

Residues 7–36 (ELRPCKICGRTFFPATLKKHVPICQKTSVK) form a C2HC/C3H-type 1 zinc finger. Residues Cys11, Cys14, His26, and Cys30 each coordinate Zn(2+). The interval 35–75 (VKKRKTFESSRQRAEGTDINTVKPVKPRPEPPKKQSNWKRK) is disordered. A compositionally biased stretch (basic and acidic residues) spans 40–50 (TFESSRQRAEG). Residues 110 to 139 (DYVQCPYCQRRFNQNAADRHINFCKEQSAR) form a C2HC/C3H-type 2 zinc finger. Zn(2+)-binding residues include Cys114, Cys117, His129, and Cys133. The segment at 138-273 (ARMGQKIKGG…EAAMGYDSSD (136 aa)) is disordered. A compositionally biased stretch (polar residues) spans 208–226 (KYQTQSPAHKNSTMVTSPQ).

This sequence belongs to the ZC2HC1 family. Requires Zn(2+) as cofactor.

The protein is Zinc finger C2HC domain-containing protein 1A (zc2hc1a) of Xenopus laevis (African clawed frog).